Consider the following 139-residue polypeptide: Ribosomal RNA large subunit methyltransferase H (139 aa).

S-adenosyl-L-methionine is bound by residues Leu57, Gly88, and 107–112; that span reads LSAMTF.

Belongs to the RNA methyltransferase RlmH family. Homodimer.

The protein resides in the cytoplasm. It catalyses the reaction pseudouridine(1915) in 23S rRNA + S-adenosyl-L-methionine = N(3)-methylpseudouridine(1915) in 23S rRNA + S-adenosyl-L-homocysteine + H(+). Specifically methylates the pseudouridine at position 1915 (m3Psi1915) in 23S rRNA. The protein is Ribosomal RNA large subunit methyltransferase H of Solibacter usitatus (strain Ellin6076).